The following is a 104-amino-acid chain: NADH-quinone oxidoreductase subunit K (104 aa).

A run of 3 helical transmembrane segments spans residues 4-24 (VPASAYLTLAIILFCIGLFGA), 31-51 (VIVLVCMELMLNAANLNLVAF), and 67-87 (LFTMSVAAAEAAVGLAILIAL).

The protein belongs to the complex I subunit 4L family. As to quaternary structure, NDH-1 is composed of 14 different subunits. Subunits NuoA, H, J, K, L, M, N constitute the membrane sector of the complex.

Its subcellular location is the cell membrane. It carries out the reaction a quinone + NADH + 5 H(+)(in) = a quinol + NAD(+) + 4 H(+)(out). Its function is as follows. NDH-1 shuttles electrons from NADH, via FMN and iron-sulfur (Fe-S) centers, to quinones in the respiratory chain. The immediate electron acceptor for the enzyme in this species is believed to be a menaquinone. Couples the redox reaction to proton translocation (for every two electrons transferred, four hydrogen ions are translocated across the cytoplasmic membrane), and thus conserves the redox energy in a proton gradient. The sequence is that of NADH-quinone oxidoreductase subunit K from Bacillus cytotoxicus (strain DSM 22905 / CIP 110041 / 391-98 / NVH 391-98).